Consider the following 304-residue polypeptide: tRNA (guanine(9)-N1)-methyltransferase (304 aa).

Composition is skewed to basic and acidic residues over residues 1–26 (MENK…KNET) and 42–72 (RQQE…KRKI). Residues 1–72 (MENKDALDIG…LRKEERKRKI (72 aa)) are disordered. One can recognise an SAM-dependent MTase TRM10-type domain in the interval 81–276 (QKKRIRLGKV…EVIPKRKGIL (196 aa)). S-adenosyl-L-methionine is bound by residues leucine 183, glycine 203, 207–211 (DKNRY), cysteine 215, leucine 229, and 241–243 (KIL). The Proton acceptor role is filled by aspartate 207. The tract at residues 282 to 304 (SFDVSEDTRSQSNQSDSELEKEN) is disordered. At serine 296 the chain carries Phosphoserine.

It belongs to the class IV-like SAM-binding methyltransferase superfamily. TRM10 family. In terms of assembly, monomer.

Its subcellular location is the cytoplasm. It localises to the nucleus. The catalysed reaction is guanosine(9) in tRNA + S-adenosyl-L-methionine = N(1)-methylguanosine(9) in tRNA + S-adenosyl-L-homocysteine + H(+). In terms of biological role, S-adenosyl-L-methionine-dependent guanine N(1)-methyltransferase that catalyzes the formation of N(1)-methylguanine at position 9 (m1G9) in cytoplasmic tRNA. This chain is tRNA (guanine(9)-N1)-methyltransferase, found in Schizosaccharomyces pombe (strain 972 / ATCC 24843) (Fission yeast).